The sequence spans 139 residues: Small ribosomal subunit protein uS12m (139 aa).

The N-terminal 29 residues, 1–29 (MSWSGPLRGLNTSLTCGPALVPRLWATCS), are a transit peptide targeting the mitochondrion. Residues 36–56 (MHRLGGPPKRPPQKLGPTEGR) form a disordered region.

It belongs to the universal ribosomal protein uS12 family. In terms of assembly, component of the mitochondrial ribosome small subunit (28S) which comprises a 12S rRNA and about 30 distinct proteins.

The protein resides in the mitochondrion. This is Small ribosomal subunit protein uS12m (MRPS12) from Pongo abelii (Sumatran orangutan).